Reading from the N-terminus, the 262-residue chain is Abhydrolase domain-containing protein AKT2 (262 aa).

The Peroxisomal targeting signal type 1 signature appears at 260–262 (SKL).

Belongs to the AB hydrolase superfamily. AKT2 hydrolase family.

It is found in the peroxisome. It functions in the pathway mycotoxin biosynthesis. Its function is as follows. Abhydrolase domain-containing protein; part of the gene clusters that mediate the biosynthesis of the host-selective toxins (HSTs) AK-toxins responsible for Japanese pear black spot disease by the Japanese pear pathotype. AK-toxins are esters of 9,10-epoxy 8-hydroxy 9-methyldecatrienoic acid (EDA). On cellular level, AK-toxins affect plasma membrane of susceptible cells and cause a sudden increase in loss of K(+) after a few minutes of toxin treatment. The acyl-CoA ligase AKT1, the hydrolase AKT2 and enoyl-CoA hydratase AKT3 are all involved in the biosynthesis of the AK-, AF- and ACT-toxin common 9,10-epoxy-8-hydroxy-9-methyl-decatrienoic acid (EDA) structural moiety. Part of the EDA biosynthesis occurs in the peroxisome since these 3 enzymes are localized in peroxisomes. The exact roles of the 3 enzymes, as well as of additional AK-toxin clusters enzymes, including AKT4, AKT6 and AKTS1, have still to be elucidated. The Cytochrome P450 monooxygenase AKT7 on the other side functions to limit production of EDA and AK-toxin, probably via the catalysis of a side reaction of EDA or its precursor. The polypeptide is Abhydrolase domain-containing protein AKT2 (Alternaria alternata (Alternaria rot fungus)).